The primary structure comprises 318 residues: COP9 signalosome complex subunit 6 (318 aa).

Residues 32–165 (VALHPLVILN…VSVYESVIDI (134 aa)) form the MPN domain.

The protein belongs to the peptidase M67A family. CSN6 subfamily. As to quaternary structure, component of the CSN complex, probably composed of cops1, cops2, cops3, cops4, cops5, cops6, cops7, cops8 and cops9.

The protein resides in the cytoplasm. The protein localises to the nucleus. Component of the COP9 signalosome complex (CSN), a complex involved in various cellular and developmental processes. The CSN complex is an essential regulator of the ubiquitin (Ubl) conjugation pathway by mediating the deneddylation of the cullin subunits of E3 ligase complexes, leading to modify the Ubl ligase activity. This Xenopus laevis (African clawed frog) protein is COP9 signalosome complex subunit 6 (cops6).